A 462-amino-acid chain; its full sequence is Chitinase-like mite allergen Der p 18.0101 (462 aa).

The first 25 residues, 1–25 (MTRLSFTVLIFLAAYFGSNIRPNVA), serve as a signal peptide directing secretion. The region spanning 29-378 (PKTVCYYESW…HAINSNYFRG (350 aa)) is the GH18 domain. The cysteines at positions 33 and 58 are disulfide-linked. 2 N-linked (GlcNAc...) asparagine glycosylation sites follow: Asn-338 and Asn-441. Residues 404-462 (VFHCHQEGFFRDKTYCAKYYECKKGDFGLEQTVHHCPNHSQAFDEVSRTCVDHAKIPGC) form the Chitin-binding type-2 domain. Residues Cys-439 and Cys-453 are joined by a disulfide bond.

It belongs to the glycosyl hydrolase 18 family. Chitinase class II subfamily. As to expression, expressed in the peritrophic matrix of the midgut, and only very weakly in fecal pellets.

The protein localises to the secreted. Functionally, probably a non-catalytic chitinase-like protein, which binds to insoluble chitin and enhances the activity of the catalytic chitinases. Has weak chitin-binding activity. The chain is Chitinase-like mite allergen Der p 18.0101 from Dermatophagoides pteronyssinus (European house dust mite).